Consider the following 236-residue polypeptide: NEP1-interacting protein 1 (236 aa).

At Met1 to Ala44 the chain is on the lumenal, thylakoid side. Residues Val45–Ile65 traverse the membrane as a helical segment. The Stromal portion of the chain corresponds to Gly66–Ala78. Residues Val79–Trp99 form a helical membrane-spanning segment. Topologically, residues Lys100–Ser104 are lumenal, thylakoid. A helical transmembrane segment spans residues Arg105–Val125. Over Arg126 to Leu236 the chain is Stromal. An RING-type; atypical zinc finger spans residues Cys191–Arg233.

Belongs to the RING-type zinc finger family. NIP subfamily. As to quaternary structure, interacts with RPOT2.

It is found in the plastid. It localises to the chloroplast thylakoid membrane. Functionally, intrinsic thylakoid membrane protein that fixes RPOT2 on the stromal side of the thylakoid membrane. This chain is NEP1-interacting protein 1 (NIP1), found in Arabidopsis thaliana (Mouse-ear cress).